Consider the following 666-residue polypeptide: DNA ligase (666 aa).

NAD(+)-binding positions include 34-38 (DAEYD), 83-84 (SL), and Glu114. The N6-AMP-lysine intermediate role is filled by Lys116. NAD(+) contacts are provided by Arg137, Glu171, Lys286, and Lys310. Positions 404, 407, 422, and 427 each coordinate Zn(2+). Residues 588 to 666 (NTESTISEKS…EEFFAILKGE (79 aa)) enclose the BRCT domain.

This sequence belongs to the NAD-dependent DNA ligase family. LigA subfamily. Mg(2+) is required as a cofactor. Requires Mn(2+) as cofactor.

The enzyme catalyses NAD(+) + (deoxyribonucleotide)n-3'-hydroxyl + 5'-phospho-(deoxyribonucleotide)m = (deoxyribonucleotide)n+m + AMP + beta-nicotinamide D-nucleotide.. Functionally, DNA ligase that catalyzes the formation of phosphodiester linkages between 5'-phosphoryl and 3'-hydroxyl groups in double-stranded DNA using NAD as a coenzyme and as the energy source for the reaction. It is essential for DNA replication and repair of damaged DNA. This chain is DNA ligase, found in Mesoplasma florum (strain ATCC 33453 / NBRC 100688 / NCTC 11704 / L1) (Acholeplasma florum).